We begin with the raw amino-acid sequence, 1083 residues long: Carbamoyl phosphate synthase large chain (1083 aa).

Residues 1–402 (MPKRTDIRKV…AYMKALRSME (402 aa)) are carboxyphosphate synthetic domain. ATP contacts are provided by Arg-129, Arg-169, Gly-175, Gly-176, Glu-208, Val-210, Glu-215, Gly-241, Val-242, His-243, Gln-285, and Glu-299. Positions 133 to 328 (KAAMQKIGVA…IAKIAAKLAL (196 aa)) constitute an ATP-grasp 1 domain. Mg(2+) is bound by residues Gln-285, Glu-299, and Asn-301. Mn(2+) is bound by residues Gln-285, Glu-299, and Asn-301. The interval 403–554 (LGRVGLESPE…YSTYEEEDEA (152 aa)) is oligomerization domain. Positions 555 to 937 (PPTDRQKVLI…AFAKSQLAAG (383 aa)) are carbamoyl phosphate synthetic domain. In terms of domain architecture, ATP-grasp 2 spans 679 to 871 (AALIEKLGLK…MAKIAALCMV (193 aa)). ATP-binding residues include Arg-715, Arg-754, Leu-756, Glu-761, Gly-787, Val-788, His-789, Ser-790, Gln-830, and Glu-842. Gln-830, Glu-842, and Asn-844 together coordinate Mg(2+). Residues Gln-830, Glu-842, and Asn-844 each coordinate Mn(2+). The 141-residue stretch at 938 to 1078 (VKLPKSGKVF…QEYLGINAAP (141 aa)) folds into the MGS-like domain. Residues 938–1083 (VKLPKSGKVF…INAAPPGTRR (146 aa)) are allosteric domain.

This sequence belongs to the CarB family. As to quaternary structure, composed of two chains; the small (or glutamine) chain promotes the hydrolysis of glutamine to ammonia, which is used by the large (or ammonia) chain to synthesize carbamoyl phosphate. Tetramer of heterodimers (alpha,beta)4. It depends on Mg(2+) as a cofactor. Requires Mn(2+) as cofactor.

The catalysed reaction is hydrogencarbonate + L-glutamine + 2 ATP + H2O = carbamoyl phosphate + L-glutamate + 2 ADP + phosphate + 2 H(+). It catalyses the reaction hydrogencarbonate + NH4(+) + 2 ATP = carbamoyl phosphate + 2 ADP + phosphate + 2 H(+). The protein operates within amino-acid biosynthesis; L-arginine biosynthesis; carbamoyl phosphate from bicarbonate: step 1/1. It functions in the pathway pyrimidine metabolism; UMP biosynthesis via de novo pathway; (S)-dihydroorotate from bicarbonate: step 1/3. Functionally, large subunit of the glutamine-dependent carbamoyl phosphate synthetase (CPSase). CPSase catalyzes the formation of carbamoyl phosphate from the ammonia moiety of glutamine, carbonate, and phosphate donated by ATP, constituting the first step of 2 biosynthetic pathways, one leading to arginine and/or urea and the other to pyrimidine nucleotides. The large subunit (synthetase) binds the substrates ammonia (free or transferred from glutamine from the small subunit), hydrogencarbonate and ATP and carries out an ATP-coupled ligase reaction, activating hydrogencarbonate by forming carboxy phosphate which reacts with ammonia to form carbamoyl phosphate. The protein is Carbamoyl phosphate synthase large chain of Myxococcus xanthus (strain DK1622).